The sequence spans 350 residues: Ferredoxin--NADP reductase (350 aa).

Thr25, Glu44, Gln52, Tyr57, Val97, Phe132, Asp298, and Ser339 together coordinate FAD.

This sequence belongs to the ferredoxin--NADP reductase type 2 family. Homodimer. FAD serves as cofactor.

The enzyme catalyses 2 reduced [2Fe-2S]-[ferredoxin] + NADP(+) + H(+) = 2 oxidized [2Fe-2S]-[ferredoxin] + NADPH. This is Ferredoxin--NADP reductase from Chlorobium limicola (strain DSM 245 / NBRC 103803 / 6330).